Reading from the N-terminus, the 156-residue chain is Cell division protein SepF (156 aa).

Belongs to the SepF family. As to quaternary structure, homodimer. Interacts with FtsZ.

The protein resides in the cytoplasm. Cell division protein that is part of the divisome complex and is recruited early to the Z-ring. Probably stimulates Z-ring formation, perhaps through the cross-linking of FtsZ protofilaments. Its function overlaps with FtsA. This is Cell division protein SepF from Bacillus cytotoxicus (strain DSM 22905 / CIP 110041 / 391-98 / NVH 391-98).